A 387-amino-acid polypeptide reads, in one-letter code: MNLHEYQAKRLLAEEGVPVPRAIPAFSVREAVNQARELGGPAWVVKAQVHAGGRGKAGGVRMVDSIAQVEKAAQELLGKPLVTAQTGPQGQHVAALLIEEPSRIARELYLALMVDRGQARITFLATREGGVDIEELAASRPEALHRVVVEPSTGFLPFQARQLGFQFGLDAGQVQQLTRIMQGMYRLAQRLDALMVEINPLAITAEGRLLALDAKVVMDDNALYRHPESDELFDSTQQDGREITARQFGLNYISLEGNIGCMVNGAGLAMATMDLIKLHGGEPANFLDVGGGAAADKVNQAFKLILSDTRVKAILVNIFGGITRCDLLAEGIIQAAAEVGLHLPVVVRLEGTRKEEGMALLRESGLSLITADGLTDAAMKAVAAAQG.

In terms of domain architecture, ATP-grasp spans 9-244; the sequence is KRLLAEEGVP…STQQDGREIT (236 aa). Residues K46, 53–55, E99, S102, and E107 contribute to the ATP site; that span reads GRG. 2 residues coordinate Mg(2+): N199 and D213. Substrate is bound by residues N264 and 321–323; that span reads GIT.

It belongs to the succinate/malate CoA ligase beta subunit family. Heterotetramer of two alpha and two beta subunits. The cofactor is Mg(2+).

The catalysed reaction is succinate + ATP + CoA = succinyl-CoA + ADP + phosphate. It carries out the reaction GTP + succinate + CoA = succinyl-CoA + GDP + phosphate. It participates in carbohydrate metabolism; tricarboxylic acid cycle; succinate from succinyl-CoA (ligase route): step 1/1. Its function is as follows. Succinyl-CoA synthetase functions in the citric acid cycle (TCA), coupling the hydrolysis of succinyl-CoA to the synthesis of either ATP or GTP and thus represents the only step of substrate-level phosphorylation in the TCA. The beta subunit provides nucleotide specificity of the enzyme and binds the substrate succinate, while the binding sites for coenzyme A and phosphate are found in the alpha subunit. This chain is Succinate--CoA ligase [ADP-forming] subunit beta, found in Acidithiobacillus ferrooxidans (strain ATCC 23270 / DSM 14882 / CIP 104768 / NCIMB 8455) (Ferrobacillus ferrooxidans (strain ATCC 23270)).